The sequence spans 212 residues: Pyrrolidone-carboxylate peptidase (212 aa).

Active-site residues include glutamate 78, cysteine 141, and histidine 165.

It belongs to the peptidase C15 family. As to quaternary structure, homotetramer.

The protein localises to the cytoplasm. It carries out the reaction Release of an N-terminal pyroglutamyl group from a polypeptide, the second amino acid generally not being Pro.. In terms of biological role, removes 5-oxoproline from various penultimate amino acid residues except L-proline. The polypeptide is Pyrrolidone-carboxylate peptidase (pcp) (Staphylococcus aureus).